The chain runs to 299 residues: MSSSFHHQPVLPQQVLEALAELPDEGVLLDATVGGGGHSSLLLDVHPGWQLIGLDQDPAARAAAAQQLERFGERVQLVASNFAAYTPDQPVVAVLADLGVSSHQLDVPERGFSFRADGPLDMRMNTEGDGETAAALIDRLEENALADLLFHYGEERLSRRIARRLKTEGPWDDGERGTAALAYAIAGCYPPKQRHGRIHAATRSFQALRIAVNDELGVLETLLNDAPNWLEPGGRIAVISFHSLEDRLVKNRFKADERLRVISRKPLIASEQEAEANPRARSAKLRVAERLSAELEPAQ.

Residues 36–38, Asp-55, Phe-82, Asp-97, and Gln-104 contribute to the S-adenosyl-L-methionine site; that span reads GGH.

Belongs to the methyltransferase superfamily. RsmH family.

It is found in the cytoplasm. It catalyses the reaction cytidine(1402) in 16S rRNA + S-adenosyl-L-methionine = N(4)-methylcytidine(1402) in 16S rRNA + S-adenosyl-L-homocysteine + H(+). Its function is as follows. Specifically methylates the N4 position of cytidine in position 1402 (C1402) of 16S rRNA. This Synechococcus sp. (strain RCC307) protein is Ribosomal RNA small subunit methyltransferase H.